The primary structure comprises 316 residues: Putative transketolase C-terminal section (316 aa).

The protein belongs to the transketolase family. Requires thiamine diphosphate as cofactor.

The catalysed reaction is D-sedoheptulose 7-phosphate + D-glyceraldehyde 3-phosphate = aldehydo-D-ribose 5-phosphate + D-xylulose 5-phosphate. This chain is Putative transketolase C-terminal section, found in Methanocaldococcus jannaschii (strain ATCC 43067 / DSM 2661 / JAL-1 / JCM 10045 / NBRC 100440) (Methanococcus jannaschii).